Reading from the N-terminus, the 182-residue chain is Protein SrpB (182 aa).

Transmembrane regions (helical) follow at residues 11 to 31 (WLGL…IGLN), 43 to 63 (TFTL…QAEG), 73 to 93 (LSRT…GLIL), and 116 to 136 (IWIT…LGLI).

This sequence belongs to the MgtC/SapB family.

It is found in the cell membrane. The chain is Protein SrpB (srpB) from Synechococcus elongatus (strain ATCC 33912 / PCC 7942 / FACHB-805) (Anacystis nidulans R2).